We begin with the raw amino-acid sequence, 626 residues long: Putative ankyrin repeat protein R837 (626 aa).

ANK repeat units lie at residues 42-72, 80-109, 110-139, 140-169, 171-199, 201-230, 242-269, 270-298, 299-328, 330-358, 393-416, 417-446, 452-479, 480-509, 510-539, 540-569, 570-599, and 601-626; these read EYFNLIDFIIETKSMEVLKYIYQSKTNGLIR, TLNTSLLTSCQNGNILLVKFFIEKGANHRY, SEDKPLGIAAANGHSDIVEYLVNGGANIKS, RNNYALRFAVKNGHYNMVKFLIEQGVDITV, DYEVFYTSCEYGHYEIFVYLMKNINDIKK, NKKRLLKKAFKGGSVKIVHYIFNDILDVYR, KNYKLLNIIGKYGNHDILEYLHNRYQLS, DTNNIAQVAALYGHFRIVKFLLDKYLHEL, NLNQLIISACDNGSIKMVKFLIEKGIDINT, GNSCLSHAILSGNTDLLHYLTNIGCRLTS, TIMSTSMYCGIIKLVKYFVDKSSL, DYESYICGIISNGHVNIIKYLLNQNKITKQ, INNSVILTIIQYGHIDMLKYLVSLGINI, CINYALDRAVSYGHLNIVEYLLELGHNINE, FGDLPLRSATIANNINMVKYLVSQGANIYI, IKDNPIYLASIHGHVKLVKYFIDLGSDYHK, KNELPLYVAIINNNLDVVKCLVEHGCKTKT, and FFDPIETAMEYYNNEIVEYLQNNEIK.

The sequence is that of Putative ankyrin repeat protein R837 from Acanthamoeba polyphaga (Amoeba).